Here is a 428-residue protein sequence, read N- to C-terminus: CinA-like protein (428 aa).

The protein belongs to the CinA family.

This chain is CinA-like protein, found in Gemmatimonas aurantiaca (strain DSM 14586 / JCM 11422 / NBRC 100505 / T-27).